Here is a 100-residue protein sequence, read N- to C-terminus: Urease subunit gamma (100 aa).

The protein belongs to the urease gamma subunit family. As to quaternary structure, heterotrimer of UreA (gamma), UreB (beta) and UreC (alpha) subunits. Three heterotrimers associate to form the active enzyme.

It is found in the cytoplasm. The catalysed reaction is urea + 2 H2O + H(+) = hydrogencarbonate + 2 NH4(+). It participates in nitrogen metabolism; urea degradation; CO(2) and NH(3) from urea (urease route): step 1/1. The protein is Urease subunit gamma of Dinoroseobacter shibae (strain DSM 16493 / NCIMB 14021 / DFL 12).